The chain runs to 596 residues: Sensor protein ChvG (596 aa).

Residues 1 to 22 form a disordered region; the sequence is MLKKTPETVSDSDDAEERGSER. Topologically, residues 1–47 are cytoplasmic; that stretch reads MLKKTPETVSDSDDAEERGSERRHRIHPLTIIRRIFGNAVFSSLTRR. Residues 48 to 68 traverse the membrane as a helical segment; that stretch reads ILFFNVAATVVLVGGILYLNQ. At 69 to 283 the chain is on the periplasmic side; that stretch reads FREGLIDARV…VHAERLAIMR (215 aa). The helical transmembrane segment at 284 to 304 threads the bilayer; it reads VFGIATLVNIVLSLLLSSTIA. One can recognise an HAMP domain in the interval 301-356; the sequence is STIATPLRRLSAAAIRVRRGARTREEIPDFSARQDEIGNLSIALREMTTALYDRID. Over 305-596 the chain is Cytoplasmic; the sequence is TPLRRLSAAA…SLPAAETHER (292 aa). The region spanning 364–592 is the Histidine kinase domain; sequence DVSHELKNPL…RFTLSLPAAE (229 aa). Phosphohistidine is present on H367.

The protein resides in the cell inner membrane. It carries out the reaction ATP + protein L-histidine = ADP + protein N-phospho-L-histidine.. Member of a two-component regulatory system ChvG/ChvI. Activates ChvI by phosphorylation (Potential). In Agrobacterium fabrum (strain C58 / ATCC 33970) (Agrobacterium tumefaciens (strain C58)), this protein is Sensor protein ChvG (chvG).